A 115-amino-acid chain; its full sequence is ATP synthase subunits region ORF 7 (115 aa).

This chain is ATP synthase subunits region ORF 7, found in Fuscovulum blasticum (Rhodobacter blasticus).